The chain runs to 434 residues: Methylenetetrahydrofolate--tRNA-(uracil-5-)-methyltransferase TrmFO (434 aa).

9-14 (GGGLAG) is a binding site for FAD.

The protein belongs to the MnmG family. TrmFO subfamily. Requires FAD as cofactor.

It localises to the cytoplasm. The catalysed reaction is uridine(54) in tRNA + (6R)-5,10-methylene-5,6,7,8-tetrahydrofolate + NADH + H(+) = 5-methyluridine(54) in tRNA + (6S)-5,6,7,8-tetrahydrofolate + NAD(+). The enzyme catalyses uridine(54) in tRNA + (6R)-5,10-methylene-5,6,7,8-tetrahydrofolate + NADPH + H(+) = 5-methyluridine(54) in tRNA + (6S)-5,6,7,8-tetrahydrofolate + NADP(+). Catalyzes the folate-dependent formation of 5-methyl-uridine at position 54 (M-5-U54) in all tRNAs. This is Methylenetetrahydrofolate--tRNA-(uracil-5-)-methyltransferase TrmFO from Geobacter sulfurreducens (strain ATCC 51573 / DSM 12127 / PCA).